We begin with the raw amino-acid sequence, 250 residues long: Short-chain dehydrogenase RED3 (250 aa).

NADP(+) is bound by residues Ile-16, Ser-35, Glu-63, and Asn-91. Residues Ser-145 and Tyr-164 each act as proton donor in the active site. Positions 164, 168, 195, and 197 each coordinate NADP(+). Lys-168 (lowers pKa of active site Tyr) is an active-site residue.

The protein belongs to the short-chain dehydrogenases/reductases (SDR) family.

Its pathway is polyketide biosynthesis. Short-chain dehydrogenase; part of the gene cluster that mediates the biosynthesis of pyriculol and pyriculariol, two heptaketides that induce lesion formation upon application on rice leaves but are dispensable for pathogenicity. The highly reducing polyketide synthase synthesizes the heptaketide backbone of pyriculol and pyriculariol. Pyriculol and pyriculariol contain several hydroxyl moieties and double bonds, so it can be assumed that several reduction steps occur during biosynthesis. These reactions could be executed by PKS19 itself or partly by the tailoring enzymes OXR1, OXR2, RED1, RED2 or RED3, identified within the cluster. The FAD-linked oxidoreductase OXR1 is the only tailoring enzyme for which the function has been determined yet, and is involved in the oxidation of dihydropyriculol and dihydropyriculariol into pyriculol and pyriculariol, respectively. In Pyricularia oryzae (strain 70-15 / ATCC MYA-4617 / FGSC 8958) (Rice blast fungus), this protein is Short-chain dehydrogenase RED3.